The following is a 49-amino-acid chain: Metallothionein (49 aa).

The interval 1 to 16 is beta; that stretch reads SCAGSCKCKNCRCRSC. A divalent metal cation-binding residues include C2, C6, C8, C11, C13, C16, C20, C21, C23, C24, C28, C31, C35, C37, C45, C47, and C48. The segment at 17–49 is alpha; the sequence is RKSCCSCCPAGCNNCAKGCVCKEPASSKCSCCH.

Belongs to the metallothionein superfamily. Type 1 family.

Metallothioneins have a high content of cysteine residues that bind various heavy metals. The sequence is that of Metallothionein from Phasianus colchicus colchicus (Black-necked pheasant).